We begin with the raw amino-acid sequence, 328 residues long: MGVKLRDVVSPRRIRLEDLRGRTVAVDAANTLYQFLSSIRQRDGTPLMDSRGRVTSHLSGILYRTAAVMEREIRVIYVFDGRSHHLKGETVSRRADIRKKSEVEWKRALEEGDIDRAKKYAVRSSRMSSEILESSKRLLELLGIPYVQAPGEGEAQASYMVKMGDAWAVASQDYDCLLFGAPRVVRNLTLSGKLEDPEIIELESTLRELSISHTQLVDMALLVGTDFNEGVKGIGARRGLKLIREKGDIFKVIRDLEADIGGDPQVLRRIFLEPEVSEDYEIRWRKPDVEGVIEFLCTEHGFSEDRVRAALKKFEGASSTQKSLEDWF.

Residues 1–98 (MGVKLRDVVS…ETVSRRADIR (98 aa)) form an N-domain region. Mg(2+) is bound by residues D27, D80, E152, E154, D173, D175, and D226. An I-domain region spans residues 116-247 (RAKKYAVRSS…RGLKLIREKG (132 aa)). An interaction with PCNA region spans residues 320 to 328 (TQKSLEDWF).

Belongs to the XPG/RAD2 endonuclease family. FEN1 subfamily. In terms of assembly, interacts with PCNA. PCNA stimulates the nuclease activity without altering cleavage specificity. Mg(2+) serves as cofactor.

In terms of biological role, structure-specific nuclease with 5'-flap endonuclease and 5'-3' exonuclease activities involved in DNA replication and repair. During DNA replication, cleaves the 5'-overhanging flap structure that is generated by displacement synthesis when DNA polymerase encounters the 5'-end of a downstream Okazaki fragment. Binds the unpaired 3'-DNA end and kinks the DNA to facilitate 5' cleavage specificity. Cleaves one nucleotide into the double-stranded DNA from the junction in flap DNA, leaving a nick for ligation. Also involved in the base excision repair (BER) pathway. Acts as a genome stabilization factor that prevents flaps from equilibrating into structures that lead to duplications and deletions. Also possesses 5'-3' exonuclease activity on nicked or gapped double-stranded DNA. This chain is Flap endonuclease 1, found in Methanothermobacter thermautotrophicus (strain ATCC 29096 / DSM 1053 / JCM 10044 / NBRC 100330 / Delta H) (Methanobacterium thermoautotrophicum).